Consider the following 226-residue polypeptide: Large ribosomal subunit protein uL1 (226 aa).

It belongs to the universal ribosomal protein uL1 family. As to quaternary structure, part of the 50S ribosomal subunit.

Functionally, binds directly to 23S rRNA. The L1 stalk is quite mobile in the ribosome, and is involved in E site tRNA release. Its function is as follows. Protein L1 is also a translational repressor protein, it controls the translation of the L11 operon by binding to its mRNA. In Treponema pallidum (strain Nichols), this protein is Large ribosomal subunit protein uL1.